Here is a 377-residue protein sequence, read N- to C-terminus: Probable staphylococcal-like nuclease CAN3 (377 aa).

Glycine 2 carries N-myristoyl glycine lipidation. A lipid anchor (S-palmitoyl cysteine) is attached at cysteine 7. The disordered stretch occupies residues 15–57 (GDHYPYYKPTSRPHYQPPHYHGQPAAPPAPPQQQPLGPHGVTP). Over residues 27–38 (PHYQPPHYHGQP) the composition is skewed to low complexity. Residues 177–353 (NTLPVYDKCI…KAANRGLWAS (177 aa)) enclose the TNase-like domain. Aspartate 190 lines the Ca(2+) pocket. Arginine 260 is a catalytic residue. Ca(2+) is bound at residue aspartate 265. Active-site residues include glutamate 268 and arginine 302.

The protein belongs to the thermonuclease family. The cofactor is Ca(2+).

The protein resides in the cell membrane. Its function is as follows. Enzyme that catalyzes the hydrolysis of both DNA and RNA at the 5' position of the phosphodiester bond. This Oryza sativa subsp. japonica (Rice) protein is Probable staphylococcal-like nuclease CAN3.